We begin with the raw amino-acid sequence, 156 residues long: 6,7-dimethyl-8-ribityllumazine synthase (156 aa).

5-amino-6-(D-ribitylamino)uracil is bound by residues Phe-22, Ala-57 to Glu-59, and Cys-81 to Ile-83. Residue Gly-86 to Thr-87 participates in (2S)-2-hydroxy-3-oxobutyl phosphate binding. The active-site Proton donor is the His-89. Phe-114 contacts 5-amino-6-(D-ribitylamino)uracil. Arg-128 is a binding site for (2S)-2-hydroxy-3-oxobutyl phosphate.

This sequence belongs to the DMRL synthase family. As to quaternary structure, forms an icosahedral capsid composed of 60 subunits, arranged as a dodecamer of pentamers.

It catalyses the reaction (2S)-2-hydroxy-3-oxobutyl phosphate + 5-amino-6-(D-ribitylamino)uracil = 6,7-dimethyl-8-(1-D-ribityl)lumazine + phosphate + 2 H2O + H(+). Its pathway is cofactor biosynthesis; riboflavin biosynthesis; riboflavin from 2-hydroxy-3-oxobutyl phosphate and 5-amino-6-(D-ribitylamino)uracil: step 1/2. In terms of biological role, catalyzes the formation of 6,7-dimethyl-8-ribityllumazine by condensation of 5-amino-6-(D-ribitylamino)uracil with 3,4-dihydroxy-2-butanone 4-phosphate. This is the penultimate step in the biosynthesis of riboflavin. In Vibrio cholerae serotype O1 (strain ATCC 39315 / El Tor Inaba N16961), this protein is 6,7-dimethyl-8-ribityllumazine synthase.